Here is a 392-residue protein sequence, read N- to C-terminus: L-rhamnonate dehydratase (392 aa).

2 residues coordinate substrate: His22 and Arg48. Mg(2+) contacts are provided by Asp214, Glu240, and Glu268. Residue His318 is the Proton acceptor of the active site. Residue Glu338 coordinates substrate.

Belongs to the mandelate racemase/muconate lactonizing enzyme family. RhamD subfamily. Homooctamer; tetramer of dimers. The cofactor is Mg(2+).

The catalysed reaction is L-rhamnonate = 2-dehydro-3-deoxy-L-rhamnonate + H2O. Catalyzes the dehydration of L-rhamnonate to 2-keto-3-deoxy-L-rhamnonate (KDR). The protein is L-rhamnonate dehydratase of Paraburkholderia phytofirmans (strain DSM 17436 / LMG 22146 / PsJN) (Burkholderia phytofirmans).